The primary structure comprises 178 residues: Large ribosomal subunit protein uL6 (178 aa).

It belongs to the universal ribosomal protein uL6 family. As to quaternary structure, part of the 50S ribosomal subunit.

Its function is as follows. This protein binds to the 23S rRNA, and is important in its secondary structure. It is located near the subunit interface in the base of the L7/L12 stalk, and near the tRNA binding site of the peptidyltransferase center. In Corynebacterium glutamicum (strain R), this protein is Large ribosomal subunit protein uL6.